Reading from the N-terminus, the 414-residue chain is Esterase FrsA (414 aa).

The protein belongs to the FrsA family.

The enzyme catalyses a carboxylic ester + H2O = an alcohol + a carboxylate + H(+). In terms of biological role, catalyzes the hydrolysis of esters. This Salmonella dublin (strain CT_02021853) protein is Esterase FrsA.